The following is a 217-amino-acid chain: Proteasome subunit beta type-6-B like protein (217 aa).

Residues 1 to 16 constitute a propeptide, removed in mature form; that stretch reads MERHFMDSQIKGVSTG. Thr-17 (nucleophile) is an active-site residue.

Belongs to the peptidase T1B family. In terms of assembly, the 26S proteasome consists of a 20S proteasome core and two 19S regulatory subunits. The 20S proteasome core is composed of 28 subunits that are arranged in four stacked rings, resulting in a barrel-shaped structure. The two end rings are each formed by seven alpha subunits, and the two central rings are each formed by seven beta subunits. The catalytic chamber with the active sites is on the inside of the barrel.

The protein resides in the cytoplasm. It is found in the nucleus. The enzyme catalyses Cleavage of peptide bonds with very broad specificity.. The proteasome is a multicatalytic proteinase complex which is characterized by its ability to cleave peptides with Arg, Phe, Tyr, Leu, and Glu adjacent to the leaving group at neutral or slightly basic pH. The proteasome has an ATP-dependent proteolytic activity. This subunit is involved in antigen processing to generate class I binding peptides. The polypeptide is Proteasome subunit beta type-6-B like protein (psmb6l-b) (Salmo salar (Atlantic salmon)).